Reading from the N-terminus, the 305-residue chain is Superkiller complex protein 8 (305 aa).

Position 1 is an N-acetylmethionine (methionine 1). N-acetylthreonine; in WD repeat-containing protein 61, N-terminally processed is present on threonine 2. WD repeat units follow at residues 14 to 57, 62 to 101, 104 to 143, 146 to 187, 188 to 227, 230 to 269, and 272 to 305; these read AHDD…LELQ, GHQLGVVSVDISHTLPIAASSSLDAHIRLWDLENGKQMKS, AGPVDAWTLAFSPDSQHLATGTHMGKVNIFGVESGKKEYS, TRGK…HTLE, GHAMPIRSLTFSPDSQLLVTASDDGYIKIYDVQHANLAGT, GHASWVLNVAFCPDDTHFVSSSSDKSVKVWDVGTRTCIHT, and DHQDQVWGVKYNGNGSKIVSVGDDQEIHVYDCPI.

It belongs to the SKI8 family. Component of the PAF1 complex, which consists of CDC73, PAF1, LEO1, CTR9, RTF1 and SKIC8. The PAF1 complex interacts with PHF5A. Within the PAF1 complex interacts directly with PHF5A. Component of the SKI complex which consists of SKIC2, SKIC3 and SKIC8.

The protein resides in the nucleus. It is found in the cytoplasm. Component of the PAF1 complex (PAF1C) which has multiple functions during transcription by RNA polymerase II and is implicated in regulation of development and maintenance of embryonic stem cell pluripotency. PAF1C associates with RNA polymerase II through interaction with POLR2A CTD non-phosphorylated and 'Ser-2'- and 'Ser-5'-phosphorylated forms and is involved in transcriptional elongation, acting both independently and synergistically with TCEA1 and in cooperation with the DSIF complex and HTATSF1. PAF1C is required for transcription of Hox and Wnt target genes. PAF1C is involved in hematopoiesis and stimulates transcriptional activity of KMT2A/MLL1; it promotes leukemogenesis through association with KMT2A/MLL1-rearranged oncoproteins, such as KMT2A/MLL1-MLLT3/AF9 and KMT2A/MLL1-MLLT1/ENL. PAF1C is involved in histone modifications such as ubiquitination of histone H2B and methylation on histone H3 'Lys-4' (H3K4me3). PAF1C recruits the RNF20/40 E3 ubiquitin-protein ligase complex and the E2 enzyme UBE2A or UBE2B to chromatin which mediate monoubiquitination of 'Lys-120' of histone H2B (H2BK120ub1); UB2A/B-mediated H2B ubiquitination is proposed to be coupled to transcription. PAF1C is involved in mRNA 3' end formation probably through association with cleavage and poly(A) factors. In case of infection by influenza A strain H3N2, PAF1C associates with viral NS1 protein, thereby regulating gene transcription. Required for mono- and trimethylation on histone H3 'Lys-4' (H3K4me3), dimethylation on histone H3 'Lys-79' (H3K4me3). Required for Hox gene transcription. Also acts as a component of the SKI complex, a multiprotein complex that assists the RNA-degrading exosome during the mRNA decay and quality-control pathways. The SKI complex catalyzes mRNA extraction from 80S ribosomal complexes in the 3'-5' direction and channels mRNA to the cytosolic exosome for degradation. SKI-mediated extraction of mRNA from stalled ribosomes allow binding of the Pelota-HBS1L complex and subsequent ribosome disassembly by ABCE1 for ribosome recycling. The sequence is that of Superkiller complex protein 8 (Skic8) from Rattus norvegicus (Rat).